A 185-amino-acid chain; its full sequence is Gastrokine-1 (185 aa).

The N-terminal stretch at 1–20 (MKFTIVFAGLLGVFLAPALA) is a signal peptide. One can recognise a BRICHOS domain in the interval 54–150 (NNGWDSWNSI…MCRGIPTYMA (97 aa)). Cys-81 and Cys-142 form a disulfide bridge.

Belongs to the gastrokine family. As to expression, expressed in stomach (at protein level). No expression is detected in cancer tissue or gastric cancer cell lines.

The protein resides in the secreted. It is found in the cytoplasmic granule. The protein localises to the golgi apparatus. Has mitogenic activity and may be involved in maintaining the integrity of the gastric mucosal epithelium. The polypeptide is Gastrokine-1 (GKN1) (Homo sapiens (Human)).